The primary structure comprises 725 residues: Glyoxysomal fatty acid beta-oxidation multifunctional protein MFP-a (725 aa).

In the N-terminal section; belongs to the enoyl-CoA hydratase/isomerase family. The protein in the central section; belongs to the 3-hydroxyacyl-CoA dehydrogenase family.

It localises to the glyoxysome. It catalyses the reaction a (3S)-3-hydroxyacyl-CoA = a (2E)-enoyl-CoA + H2O. The catalysed reaction is a 4-saturated-(3S)-3-hydroxyacyl-CoA = a (3E)-enoyl-CoA + H2O. The enzyme catalyses a (3Z)-enoyl-CoA = a 4-saturated (2E)-enoyl-CoA. It carries out the reaction a (3E)-enoyl-CoA = a 4-saturated (2E)-enoyl-CoA. It catalyses the reaction (3S)-3-hydroxybutanoyl-CoA = (3R)-3-hydroxybutanoyl-CoA. The catalysed reaction is a (3S)-3-hydroxyacyl-CoA + NAD(+) = a 3-oxoacyl-CoA + NADH + H(+). It participates in lipid metabolism; fatty acid beta-oxidation. The protein is Glyoxysomal fatty acid beta-oxidation multifunctional protein MFP-a of Cucumis sativus (Cucumber).